The sequence spans 93 residues: Transcription factor RADIALIS (93 aa).

Residues 6 to 61 (GSGRPWSAKENKAFERALAVYDKDTPDRWANVARAVEGRTPEEVKKHYEILVEDIK) enclose the SANT domain.

As to expression, specifically expressed in the dorsal region of developing flowers.

It localises to the nucleus. Involved in the dorsovental asymmetry of flowers. Promotes dorsal identity. In Antirrhinum majus (Garden snapdragon), this protein is Transcription factor RADIALIS (RAD).